A 358-amino-acid polypeptide reads, in one-letter code: tRNA-specific 2-thiouridylase MnmA (358 aa).

ATP contacts are provided by residues 7–14 (AMSGGVDS) and methionine 33. The active-site Nucleophile is the cysteine 102. Cysteine 102 and cysteine 199 are disulfide-bonded. Glycine 126 contributes to the ATP binding site. The segment at 149–151 (KDQ) is interaction with tRNA. Cysteine 199 acts as the Cysteine persulfide intermediate in catalysis. An interaction with tRNA region spans residues 305-306 (RY).

This sequence belongs to the MnmA/TRMU family.

The protein localises to the cytoplasm. The enzyme catalyses S-sulfanyl-L-cysteinyl-[protein] + uridine(34) in tRNA + AH2 + ATP = 2-thiouridine(34) in tRNA + L-cysteinyl-[protein] + A + AMP + diphosphate + H(+). Its function is as follows. Catalyzes the 2-thiolation of uridine at the wobble position (U34) of tRNA, leading to the formation of s(2)U34. This Halothermothrix orenii (strain H 168 / OCM 544 / DSM 9562) protein is tRNA-specific 2-thiouridylase MnmA.